The chain runs to 86 residues: UPF0297 protein STH1998 (86 aa).

It belongs to the UPF0297 family.

The polypeptide is UPF0297 protein STH1998 (Symbiobacterium thermophilum (strain DSM 24528 / JCM 14929 / IAM 14863 / T)).